Consider the following 260-residue polypeptide: 5-oxoprolinase subunit A (260 aa).

It belongs to the LamB/PxpA family. As to quaternary structure, forms a complex composed of PxpA, PxpB and PxpC.

The catalysed reaction is 5-oxo-L-proline + ATP + 2 H2O = L-glutamate + ADP + phosphate + H(+). Catalyzes the cleavage of 5-oxoproline to form L-glutamate coupled to the hydrolysis of ATP to ADP and inorganic phosphate. This is 5-oxoprolinase subunit A from Methylococcus capsulatus (strain ATCC 33009 / NCIMB 11132 / Bath).